A 305-amino-acid polypeptide reads, in one-letter code: Glycine--tRNA ligase alpha subunit (305 aa).

This sequence belongs to the class-II aminoacyl-tRNA synthetase family. In terms of assembly, tetramer of two alpha and two beta subunits.

It is found in the cytoplasm. It carries out the reaction tRNA(Gly) + glycine + ATP = glycyl-tRNA(Gly) + AMP + diphosphate. The protein is Glycine--tRNA ligase alpha subunit of Streptococcus pyogenes serotype M4 (strain MGAS10750).